Reading from the N-terminus, the 272-residue chain is Phosphatidylglycerol--prolipoprotein diacylglyceryl transferase (272 aa).

7 helical membrane passes run 17 to 37 (LQVH…WGLA), 55 to 75 (LVFY…VLFY), 90 to 110 (VWTG…AMLF), 125 to 145 (FIAP…FIGG), 174 to 194 (PSQI…LWWF), 202 to 222 (MAVS…MEFF), and 230 to 250 (GFIL…MLLI). R138 serves as a coordination point for a 1,2-diacyl-sn-glycero-3-phospho-(1'-sn-glycerol).

Belongs to the Lgt family.

It is found in the cell inner membrane. The enzyme catalyses L-cysteinyl-[prolipoprotein] + a 1,2-diacyl-sn-glycero-3-phospho-(1'-sn-glycerol) = an S-1,2-diacyl-sn-glyceryl-L-cysteinyl-[prolipoprotein] + sn-glycerol 1-phosphate + H(+). It participates in protein modification; lipoprotein biosynthesis (diacylglyceryl transfer). Catalyzes the transfer of the diacylglyceryl group from phosphatidylglycerol to the sulfhydryl group of the N-terminal cysteine of a prolipoprotein, the first step in the formation of mature lipoproteins. This Acinetobacter baumannii (strain ACICU) protein is Phosphatidylglycerol--prolipoprotein diacylglyceryl transferase.